Here is a 359-residue protein sequence, read N- to C-terminus: 24-methylenesterol C-methyltransferase 3 (359 aa).

The chain crosses the membrane as a helical span at residues 4 to 24 (VALYCTAGLIAGAVYWFICVL).

The protein belongs to the class I-like SAM-binding methyltransferase superfamily. Erg6/SMT family.

It localises to the membrane. The catalysed reaction is 24-methylidenelophenol + S-adenosyl-L-methionine = (Z)-24-ethylidenelophenol + S-adenosyl-L-homocysteine + H(+). Its pathway is steroid biosynthesis; sterol biosynthesis. In terms of biological role, catalyzes the methyl transfer from S-adenosyl-methionine to the methylene group of 24-methylene lophenol to form 24-ethylidene lophenol. The polypeptide is 24-methylenesterol C-methyltransferase 3 (SMT3) (Arabidopsis thaliana (Mouse-ear cress)).